A 168-amino-acid chain; its full sequence is Crossover junction endodeoxyribonuclease RuvC (168 aa).

Catalysis depends on residues aspartate 10, glutamate 70, and aspartate 143. Positions 10, 70, and 143 each coordinate Mg(2+).

The protein belongs to the RuvC family. Homodimer which binds Holliday junction (HJ) DNA. The HJ becomes 2-fold symmetrical on binding to RuvC with unstacked arms; it has a different conformation from HJ DNA in complex with RuvA. In the full resolvosome a probable DNA-RuvA(4)-RuvB(12)-RuvC(2) complex forms which resolves the HJ. The cofactor is Mg(2+).

It localises to the cytoplasm. The enzyme catalyses Endonucleolytic cleavage at a junction such as a reciprocal single-stranded crossover between two homologous DNA duplexes (Holliday junction).. In terms of biological role, the RuvA-RuvB-RuvC complex processes Holliday junction (HJ) DNA during genetic recombination and DNA repair. Endonuclease that resolves HJ intermediates. Cleaves cruciform DNA by making single-stranded nicks across the HJ at symmetrical positions within the homologous arms, yielding a 5'-phosphate and a 3'-hydroxyl group; requires a central core of homology in the junction. The consensus cleavage sequence is 5'-(A/T)TT(C/G)-3'. Cleavage occurs on the 3'-side of the TT dinucleotide at the point of strand exchange. HJ branch migration catalyzed by RuvA-RuvB allows RuvC to scan DNA until it finds its consensus sequence, where it cleaves and resolves the cruciform DNA. In Roseiflexus sp. (strain RS-1), this protein is Crossover junction endodeoxyribonuclease RuvC.